Reading from the N-terminus, the 158-residue chain is MNIRRRRRLLVVVAILVGLGLATGLVMYALRSNIDLFYTPSEILNGRGPEHKDIPHPGQRLRIGGMVMPGSVKRDPKSLAVEFKLYDANGVVSVSYVGILPDLFREGQGIVAEGVLEDGNLSGDQVLAKHDEKYTPPEIEDAMKQNHKGLLNVSEPTR.

Over 1 to 8 (MNIRRRRR) the chain is Cytoplasmic. Residues 9 to 29 (LLVVVAILVGLGLATGLVMYA) form a helical; Signal-anchor for type II membrane protein membrane-spanning segment. The Periplasmic portion of the chain corresponds to 30 to 158 (LRSNIDLFYT…GLLNVSEPTR (129 aa)). Residues His130 and Tyr134 each contribute to the heme site.

It belongs to the CcmE/CycJ family.

It localises to the cell inner membrane. Functionally, heme chaperone required for the biogenesis of c-type cytochromes. Transiently binds heme delivered by CcmC and transfers the heme to apo-cytochromes in a process facilitated by CcmF and CcmH. This is Cytochrome c-type biogenesis protein CcmE from Tatumella citrea (Pantoea citrea).